Reading from the N-terminus, the 135-residue chain is DNA-binding protein H-NS homolog (135 aa).

A DNA-binding region spans residues 112–117 (QGRTPS).

The protein belongs to the histone-like protein H-NS family. Homodimer that oligomerizes on DNA into higher-order complexes that form bridges between disparate regions of DNA compacting it.

It localises to the cytoplasm. The protein resides in the nucleoid. A DNA-binding protein implicated in transcriptional repression and chromosome organization and compaction. Binds nucleation sites in AT-rich DNA and bridges them, forming higher-order nucleoprotein complexes and condensing the chromosome. A subset of genes are repressed by H-NS in association with other proteins. This is DNA-binding protein H-NS homolog (hns) from Buchnera aphidicola subsp. Acyrthosiphon pisum (strain APS) (Acyrthosiphon pisum symbiotic bacterium).